The chain runs to 242 residues: Ubiquinone biosynthesis O-methyltransferase (242 aa).

Residues Arg44, Gly64, Asp85, and Met129 each coordinate S-adenosyl-L-methionine.

The protein belongs to the methyltransferase superfamily. UbiG/COQ3 family.

It catalyses the reaction a 3-demethylubiquinol + S-adenosyl-L-methionine = a ubiquinol + S-adenosyl-L-homocysteine + H(+). The catalysed reaction is a 3-(all-trans-polyprenyl)benzene-1,2-diol + S-adenosyl-L-methionine = a 2-methoxy-6-(all-trans-polyprenyl)phenol + S-adenosyl-L-homocysteine + H(+). Its pathway is cofactor biosynthesis; ubiquinone biosynthesis. Functionally, O-methyltransferase that catalyzes the 2 O-methylation steps in the ubiquinone biosynthetic pathway. The polypeptide is Ubiquinone biosynthesis O-methyltransferase (Klebsiella pneumoniae (strain 342)).